The following is a 692-amino-acid chain: Catalase-B (692 aa).

Active-site residues include His-69 and Asn-142. Tyr-356 is a heme binding site.

The protein belongs to the catalase family. Requires heme as cofactor.

The protein localises to the cytoplasm. It catalyses the reaction 2 H2O2 = O2 + 2 H2O. Functionally, occurs in almost all aerobically respiring organisms and serves to protect cells from the toxic effects of hydrogen peroxide. Its accumulation in prespore cells affords the spores protection from oxidation during prolonged dormancy. Required for normal developmental timing, possibly through a regulatory role in differentiation and morphogenesis. In Dictyostelium discoideum (Social amoeba), this protein is Catalase-B (catB).